The primary structure comprises 248 residues: MSFPYFISPEQAMRERSELARKGIARAKSVVALAYAGGVLFVAENPSRSLQKISELYDRVGFAAAGKFNEFDNLRRGGIQFADTRGYAYDRRDVTGRQLANVYAQTLGTIFTEQAKPYEVELCVAEVAHYGETKPPELYRITYDGSIADEPHFVVMGGTTEPIANALKESYAENASLTDALGIAVAALRAGSADTSGGDQPTLGVASLEVAVLDANRPRRAFRRITGSALQALLVDQESPQSDGESSG.

Belongs to the peptidase T1A family. In terms of assembly, the 20S proteasome core is composed of 14 alpha and 14 beta subunits that assemble into four stacked heptameric rings, resulting in a barrel-shaped structure. The two inner rings, each composed of seven catalytic beta subunits, are sandwiched by two outer rings, each composed of seven alpha subunits. The catalytic chamber with the active sites is on the inside of the barrel. Has a gated structure, the ends of the cylinder being occluded by the N-termini of the alpha-subunits. Is capped by the proteasome-associated ATPase, ARC.

The protein resides in the cytoplasm. The protein operates within protein degradation; proteasomal Pup-dependent pathway. Its activity is regulated as follows. The formation of the proteasomal ATPase ARC-20S proteasome complex, likely via the docking of the C-termini of ARC into the intersubunit pockets in the alpha-rings, may trigger opening of the gate for substrate entry. Interconversion between the open-gate and close-gate conformations leads to a dynamic regulation of the 20S proteasome proteolysis activity. Component of the proteasome core, a large protease complex with broad specificity involved in protein degradation. The protein is Proteasome subunit alpha of Mycobacterium bovis (strain BCG / Pasteur 1173P2).